The chain runs to 582 residues: MGIPVRSLLVASIVLSSIALHVAAAKNLDPYKVLGVDKSASQRDIQKAFHKLSLKYHPDKNKSKGAQEKFAEINNAYDILSDEEKRKNYDLYGDEKGNPGFGGGNFGNREGYTYFTGGGAKTSHFSSGDGWQTMGGQGNTKTFSFSFGGGNPGAGGGNPFNFDFGDVFSNIFSGGSMGGSQHTGSAGKARRGTKSSGHDSSSVNIQEVTMQIFNKETADQGITWLLLFYTPNTKGQFVLESVVEDVARSLDGALRAGKVNCDHEKALCKKAGVSIGKSARLFIYSYTTTEKGSLHEYSGDYDSKSLKTFCQEHLPRFSKRVDINQFSFPSNIIPNLPQVLLLSAKKDTPAMWRAVSGMFRSRLIFYDAEVQDVSHPLLKSLGVKNIPALIGRSVNGEEQLLKDGISVKDLRSGIKELKNLLENFEKKNKKLASNQAKKPAHTDQPKENKIPLLTASNFEEICGEKTSVCILGIFKSSKAKENLEAVLSEISQKTLIRGQNYNSGNAVAYALLDGNKQSAFLSTFDKSAFKSSDKLLLAYKPRRGRYAVYDNEVTMEEAERFVVSVLNGDVQLSAAGRKPVLR.

The signal sequence occupies residues 1–25; sequence MGIPVRSLLVASIVLSSIALHVAAA. Residues 29 to 93 enclose the J domain; it reads DPYKVLGVDK…EKRKNYDLYG (65 aa). An N-linked (GlcNAc...) asparagine glycan is attached at Asn61. A disordered region spans residues 178-201; it reads GGSQHTGSAGKARRGTKSSGHDSS. The stretch at 407–437 forms a coiled coil; that stretch reads VKDLRSGIKELKNLLENFEKKNKKLASNQAK.

Interacts with BIP5.

It localises to the endoplasmic reticulum. It is found in the vacuole. Functionally, may play a role in protein folding in the endoplasmic reticulum. The polypeptide is DnaJ protein ERDJ3A (Oryza sativa subsp. japonica (Rice)).